A 136-amino-acid chain; its full sequence is Transcription antitermination protein NusB (136 aa).

The protein belongs to the NusB family.

Involved in transcription antitermination. Required for transcription of ribosomal RNA (rRNA) genes. Binds specifically to the boxA antiterminator sequence of the ribosomal RNA (rrn) operons. In Arthrobacter sp. (strain FB24), this protein is Transcription antitermination protein NusB.